The following is a 597-amino-acid chain: Aspartate--tRNA(Asp/Asn) ligase (597 aa).

Residue E182 participates in L-aspartate binding. The aspartate stretch occupies residues 206–209; sequence QLFK. Residue R228 participates in L-aspartate binding. Residues 228-230 and Q237 each bind ATP; that span reads RDE. Position 455 (H455) interacts with L-aspartate. E489 is an ATP binding site. R496 serves as a coordination point for L-aspartate. Position 541-544 (541-544) interacts with ATP; it reads GFDR.

Belongs to the class-II aminoacyl-tRNA synthetase family. Type 1 subfamily. As to quaternary structure, homodimer.

It localises to the cytoplasm. The catalysed reaction is tRNA(Asx) + L-aspartate + ATP = L-aspartyl-tRNA(Asx) + AMP + diphosphate. Aspartyl-tRNA synthetase with relaxed tRNA specificity since it is able to aspartylate not only its cognate tRNA(Asp) but also tRNA(Asn). Reaction proceeds in two steps: L-aspartate is first activated by ATP to form Asp-AMP and then transferred to the acceptor end of tRNA(Asp/Asn). The chain is Aspartate--tRNA(Asp/Asn) ligase from Desulfosudis oleivorans (strain DSM 6200 / JCM 39069 / Hxd3) (Desulfococcus oleovorans).